A 164-amino-acid chain; its full sequence is Arginine repressor (164 aa).

This sequence belongs to the ArgR family.

The protein localises to the cytoplasm. It functions in the pathway amino-acid biosynthesis; L-arginine biosynthesis [regulation]. Regulates arginine biosynthesis genes. This is Arginine repressor from Thermus thermophilus (strain ATCC BAA-163 / DSM 7039 / HB27).